A 1044-amino-acid chain; its full sequence is Pre-mRNA-splicing factor ATP-dependent RNA helicase DHX16 (1044 aa).

2 disordered regions span residues 101 to 210 (EDSE…AYEE) and 374 to 394 (LQGN…QKES). 3 positions are modified to phosphoserine: Ser-103, Ser-106, and Ser-107. Positions 119–130 (QKKRKKRKHLRK) are enriched in basic residues. Acidic residues predominate over residues 134-143 (EEEEEEEEEA). The residue at position 163 (Ser-163) is a Phosphoserine. Basic and acidic residues predominate over residues 169–210 (RTERERLQDLEERDAFAERVRQRDKDRTRNVLERSDKKAYEE). The 165-residue stretch at 412-576 (LAAIANHQVL…FDDAPVFRIP (165 aa)) folds into the Helicase ATP-binding domain. 425-432 (GETGSGKT) provides a ligand contact to ATP. The DEAH box signature appears at 523–526 (DEAH). In terms of domain architecture, Helicase C-terminal spans 601-774 (SVLQIHVTQP…NVVLLLKSLG (174 aa)). Phosphothreonine is present on Thr-715.

Belongs to the DEAD box helicase family. DEAH subfamily. DDX16/PRP8 sub-subfamily. In terms of assembly, component of pre-catalytic spliceosome complexes. Component of the minor spliceosome, which splices U12-type introns. Interacts with GPKOW. Interacts with TRIM6. Interacts with RIGI.

It is found in the nucleus. It localises to the nucleoplasm. Its subcellular location is the cytoplasm. The enzyme catalyses ATP + H2O = ADP + phosphate + H(+). Its function is as follows. Required for pre-mRNA splicing as a component of the spliceosome. Contributes to pre-mRNA splicing after spliceosome formation and prior to the first transesterification reaction. As a component of the minor spliceosome, involved in the splicing of U12-type introns in pre-mRNAs. Also plays a role in innate antiviral response by acting as a pattern recognition receptor sensing splicing signals in viral RNA. Mechanistically, TRIM6 promotes the interaction between unanchored 'Lys-48'-polyubiquitin chains and DHX16, leading to DHX16 interaction with RIGI and ssRNA to amplify RIGI-dependent innate antiviral immune responses. The sequence is that of Pre-mRNA-splicing factor ATP-dependent RNA helicase DHX16 (DHX16) from Pan troglodytes (Chimpanzee).